The chain runs to 212 residues: Thymidylate kinase (212 aa).

Residue 10–17 participates in ATP binding; sequence GLDGAGKT.

Belongs to the thymidylate kinase family.

It catalyses the reaction dTMP + ATP = dTDP + ADP. Functionally, phosphorylation of dTMP to form dTDP in both de novo and salvage pathways of dTTP synthesis. This chain is Thymidylate kinase, found in Blochmanniella pennsylvanica (strain BPEN).